The following is a 532-amino-acid chain: MIQKVGIIGSGISGLSSYYYLRNGINLTSKFSKNNLKINIFEKSNKVGGNIQTRIIQGKNKDEKIIVEEGPRSLRALGRGLNTLEFIKRLGISNDIIFSSANSNGKFVLLDGKPKEIPMTSLFDIIKFSFKHSIVSSILKEPFKKVPSQVKEMDPNWDESVHDFFSRRLGKTMTKTFIEPTILGIYGGDYTNLSIKSTFKRAALLEPFGGLILGSLFKSKKQKQFELDLDKNEKRLLPSKNELTELFDKDTDKTNVFSFKENGLSRMIQKLKSLIESDSLTKLYLSTSIVEIEKDVTNGTLKVTDNKGNQYQYDQLISTIPLNQLAPMFKKSDSKLYQLLQSVNYTSIAVINLIYKSNKNVVKIISDKGFGYLVPSKENQSVIGVCFDSNTFPEFVNNNNNNNNDNDNGNEKDQSIITVMIGGNNGIKDRNDNWIDVTNTSKDKLLDIALKHLDKVLDIESSPDFTNVSIYDNGIPHYNIGHQNLINEIQNHITKNYGTTLLLGGNSIDGVGINDSIHKSKQLINSLKLSNN.

Residues 9-14 (GSGISG), isoleucine 289, and 511-513 (VGI) each bind FAD.

The protein belongs to the protoporphyrinogen/coproporphyrinogen oxidase family. Protoporphyrinogen oxidase subfamily. FAD serves as cofactor.

It localises to the mitochondrion. The catalysed reaction is protoporphyrinogen IX + 3 O2 = protoporphyrin IX + 3 H2O2. It functions in the pathway porphyrin-containing compound metabolism; protoporphyrin-IX biosynthesis; protoporphyrin-IX from protoporphyrinogen-IX: step 1/1. Functionally, catalyzes the 6-electron oxidation of protoporphyrinogen-IX to form protoporphyrin-IX. In Dictyostelium discoideum (Social amoeba), this protein is Protoporphyrinogen oxidase (ppox).